Here is a 103-residue protein sequence, read N- to C-terminus: Transcription factor S (103 aa).

Cys-4, Cys-7, Cys-20, Cys-23, Cys-64, Cys-67, Cys-92, and Cys-95 together coordinate Zn(2+). Residues Cys-4–Cys-23 form a C4-type zinc finger. The TFIIS-type zinc-finger motif lies at Thr-60 to Arg-100.

The protein belongs to the archaeal RpoM/eukaryotic RPA12/RPB9/RPC11 RNA polymerase family.

Its function is as follows. Induces RNA cleavage activity in the RNA polymerase. In its presence, the cleavage activity of the RNA polymerase truncates the RNA back to position +15 in a stepwise manner by releasing mainly dinucleotides from the 3'-end of the nascent RNA. The truncated RNAs are able to continue elongation. Involved in transcriptional proofreading and fidelity. Misincorporation of nucleotides during elongation of transcription leads to arrested elongation complexes which are rescued by TFS-promoted removal of a dinucleotide from the 3'-end. TFS is able to induce a cleavage resynthesis cycle in stalled elongation complexes (resulting from the next missing nucleotide or a reduced incorporation rate of a wrong nucleotide) preventing misincorporation and enabling proofreading in a post-incorporation manner. Pausing of elongation complexes is the main determinant of TFS-induced RNA cleavage. The chain is Transcription factor S from Archaeoglobus fulgidus (strain ATCC 49558 / DSM 4304 / JCM 9628 / NBRC 100126 / VC-16).